The primary structure comprises 419 residues: GTPase Obg (419 aa).

The Obg domain occupies 2–159 (SAFVDAVTVE…FLAKVELQVL (158 aa)). An OBG-type G domain is found at 160 to 325 (ADVGLLGYPN…LKYEIATTLK (166 aa)). Residues 166–173 (GYPNVGKS), 191–195 (FTTLS), 212–215 (DLPG), 279–282 (NKMD), and 306–308 (SAL) contribute to the GTP site. Mg(2+) is bound by residues Ser173 and Thr193. An OCT domain is found at 341-419 (LNAEDAVDFI…IFSYEFEYLE (79 aa)).

The protein belongs to the TRAFAC class OBG-HflX-like GTPase superfamily. OBG GTPase family. As to quaternary structure, monomer. The cofactor is Mg(2+).

The protein localises to the cytoplasm. In terms of biological role, an essential GTPase which binds GTP, GDP and possibly (p)ppGpp with moderate affinity, with high nucleotide exchange rates and a fairly low GTP hydrolysis rate. Plays a role in control of the cell cycle, stress response, ribosome biogenesis and in those bacteria that undergo differentiation, in morphogenesis control. This Acholeplasma laidlawii (strain PG-8A) protein is GTPase Obg.